We begin with the raw amino-acid sequence, 208 residues long: dTTP/UTP pyrophosphatase (208 aa).

Residues 28–48 (DRIHPADIDETPQRAEHPRSL) form a disordered region. The Proton acceptor role is filled by Asp79.

Belongs to the Maf family. YhdE subfamily. A divalent metal cation serves as cofactor.

The protein localises to the cytoplasm. The catalysed reaction is dTTP + H2O = dTMP + diphosphate + H(+). It carries out the reaction UTP + H2O = UMP + diphosphate + H(+). Functionally, nucleoside triphosphate pyrophosphatase that hydrolyzes dTTP and UTP. May have a dual role in cell division arrest and in preventing the incorporation of modified nucleotides into cellular nucleic acids. This chain is dTTP/UTP pyrophosphatase, found in Brucella abortus (strain 2308).